The primary structure comprises 282 residues: Shikimate dehydrogenase (NADP(+)) (282 aa).

Shikimate is bound by residues 16 to 18 (SLS) and Thr63. Catalysis depends on Lys67, which acts as the Proton acceptor. The shikimate site is built by Asn88 and Asp103. NADP(+) contacts are provided by residues 128-132 (GAGGA) and Gly243.

It belongs to the shikimate dehydrogenase family. Homodimer.

It carries out the reaction shikimate + NADP(+) = 3-dehydroshikimate + NADPH + H(+). The protein operates within metabolic intermediate biosynthesis; chorismate biosynthesis; chorismate from D-erythrose 4-phosphate and phosphoenolpyruvate: step 4/7. Its function is as follows. Involved in the biosynthesis of the chorismate, which leads to the biosynthesis of aromatic amino acids. Catalyzes the reversible NADPH linked reduction of 3-dehydroshikimate (DHSA) to yield shikimate (SA). In Xylella fastidiosa (strain 9a5c), this protein is Shikimate dehydrogenase (NADP(+)).